The sequence spans 145 residues: 3-hydroxyacyl-[acyl-carrier-protein] dehydratase FabZ (145 aa).

The active site involves His49.

It belongs to the thioester dehydratase family. FabZ subfamily.

Its subcellular location is the cytoplasm. It catalyses the reaction a (3R)-hydroxyacyl-[ACP] = a (2E)-enoyl-[ACP] + H2O. Involved in unsaturated fatty acids biosynthesis. Catalyzes the dehydration of short chain beta-hydroxyacyl-ACPs and long chain saturated and unsaturated beta-hydroxyacyl-ACPs. In Ehrlichia ruminantium (strain Welgevonden), this protein is 3-hydroxyacyl-[acyl-carrier-protein] dehydratase FabZ.